The following is a 549-amino-acid chain: DDB1- and CUL4-associated factor 11 (549 aa).

The segment covering 1 to 24 (MGSRNSSSAGSGSLEPSEGLSRRG) has biased composition (low complexity). The interval 1–40 (MGSRNSSSAGSGSLEPSEGLSRRGAGLRRSEEEEEEDEDV) is disordered. S73 and S75 each carry phosphoserine. The segment covering 80–89 (DSAWDGRLGD) has biased composition (basic and acidic residues). The segment at 80-100 (DSAWDGRLGDRYNPPVDATPD) is disordered. WD repeat units follow at residues 170–210 (TYSQ…HKFK), 216–258 (DVGW…TALD), 263–302 (ERRFAVFSIAVSSDGREVLGGANDGCLYVFDREQNRRTLQ), 305–345 (SHED…EDDP), 353–392 (GHQDGITFIDSKGDARYLISNSKDQTIKLWDIRRFSSREG), 435–480 (GVLH…KKLT), and 481–520 (NHKACVRDVSWHPFEEKIVSSSWDGSLRLWQYRQAEYFQD).

Interacts with DDB1 and CUL4A.

The protein operates within protein modification; protein ubiquitination. In terms of biological role, may function as a substrate receptor for CUL4-DDB1 E3 ubiquitin-protein ligase complex. This chain is DDB1- and CUL4-associated factor 11 (Dcaf11), found in Rattus norvegicus (Rat).